The sequence spans 179 residues: ATP synthase subunit delta (179 aa).

The protein belongs to the ATPase delta chain family. As to quaternary structure, F-type ATPases have 2 components, F(1) - the catalytic core - and F(0) - the membrane proton channel. F(1) has five subunits: alpha(3), beta(3), gamma(1), delta(1), epsilon(1). F(0) has three main subunits: a(1), b(2) and c(10-14). The alpha and beta chains form an alternating ring which encloses part of the gamma chain. F(1) is attached to F(0) by a central stalk formed by the gamma and epsilon chains, while a peripheral stalk is formed by the delta and b chains.

It is found in the cell inner membrane. In terms of biological role, f(1)F(0) ATP synthase produces ATP from ADP in the presence of a proton or sodium gradient. F-type ATPases consist of two structural domains, F(1) containing the extramembraneous catalytic core and F(0) containing the membrane proton channel, linked together by a central stalk and a peripheral stalk. During catalysis, ATP synthesis in the catalytic domain of F(1) is coupled via a rotary mechanism of the central stalk subunits to proton translocation. This protein is part of the stalk that links CF(0) to CF(1). It either transmits conformational changes from CF(0) to CF(1) or is implicated in proton conduction. This chain is ATP synthase subunit delta, found in Burkholderia thailandensis (strain ATCC 700388 / DSM 13276 / CCUG 48851 / CIP 106301 / E264).